The primary structure comprises 776 residues: MRQNYDDRKIVKQYREIARQIVKKEGLYKNMDQAELCEQTNFWREKFKTKPMTDRDKINIFALAREAASRIIGLDAVVVQLIGALVLGDGKVAEMKTGEGKTLMSLFVMFIEVMRGNRVHLVTANEYLARRDREEIGQVLEYLGVSVALNESGLDIAQKKAIYTADVIYGTASEFGFDYLRDNMVRQKEDKVQSGLDFVLIDEADSILIDEARTPLLISDRKEEDLSLYHKANKLVKKMMKDDYEMEEHKRFVWLNDAGIEKAQKFWGVESLYSAEAQSELRITMLLMRAHFLMHKDKDYVVLDDEVLIIDPHTGRALPGRRFNDGLHQAIEAKEGVEVKEESRTLATITIQNYFRMYKKISGMTGTAKTEEEEFRQIYNMDVVVIPTNLRVNREDMQDDIFYTKKEKGRAIVYEVSWRYEKGQPTLIGTSSIKSNEWISGLLDAAGIPHQVLNAKNHAQEAEIIAKAGKRGMVTLATNMAGRGTDIKLDPDVHKLGGLAVIGTERHESRRIDLQLMGRSGRRGDPGFSKFMISLEDDLLEQFESKSWEKLSAKLKRKAPRDGKPVNSRKIHAVVVDAQKRLEGANYDIRKDLLSYDEVIDLQRKMVYKERDLLLERNKLGVSSEKILREVAEYSFIHPSDIPEEELEIYYSRQKELLGGTKFPISFDQVTLMEPREVVEEIVSWHKKERNKFPAETIAAIEREVYLNLMDQMWVMHLDAMVQLREGIHLRAYGQQDPLVMYQKEGAQLFEKFQADYHFYFAHALLELDPDGLIQG.

Residues Gln80, Gly98 to Thr102, and Asp486 each bind ATP.

It belongs to the SecA family. In terms of assembly, monomer and homodimer. Part of the essential Sec protein translocation apparatus which comprises SecA, SecYEG and auxiliary proteins SecDF. Other proteins may also be involved.

Its subcellular location is the cell membrane. The protein localises to the cytoplasm. It carries out the reaction ATP + H2O + cellular proteinSide 1 = ADP + phosphate + cellular proteinSide 2.. Functionally, part of the Sec protein translocase complex. Interacts with the SecYEG preprotein conducting channel. Has a central role in coupling the hydrolysis of ATP to the transfer of proteins into and across the cell membrane, serving as an ATP-driven molecular motor driving the stepwise translocation of polypeptide chains across the membrane. This is Protein translocase subunit SecA 2 from Listeria monocytogenes serotype 1/2a (strain 10403S).